We begin with the raw amino-acid sequence, 483 residues long: 6-phosphogluconate dehydrogenase, decarboxylating (483 aa).

NADP(+) contacts are provided by residues 10–15 (GLAVMG) and 33–35 (NRT). Residue Lys38 is modified to N6-acetyllysine. Ser57 carries the post-translational modification Phosphoserine. NADP(+)-binding positions include 75–77 (VKA) and Asn103. Residues Asn103, Ser129, and Gly131 each coordinate substrate. Phosphoserine is present on Ser129. The Proton acceptor role is filled by Lys184. 187–188 (HN) provides a ligand contact to substrate. Catalysis depends on Glu191, which acts as the Proton donor. 5 residues coordinate substrate: Tyr192, Lys261, Arg288, Arg447, and His453. 478–481 (SSSY) provides a ligand contact to NADP(+).

This sequence belongs to the 6-phosphogluconate dehydrogenase family. In terms of assembly, homodimer.

The protein localises to the cytoplasm. The enzyme catalyses 6-phospho-D-gluconate + NADP(+) = D-ribulose 5-phosphate + CO2 + NADPH. Its pathway is carbohydrate degradation; pentose phosphate pathway; D-ribulose 5-phosphate from D-glucose 6-phosphate (oxidative stage): step 3/3. Functionally, catalyzes the oxidative decarboxylation of 6-phosphogluconate to ribulose 5-phosphate and CO(2), with concomitant reduction of NADP to NADPH. The polypeptide is 6-phosphogluconate dehydrogenase, decarboxylating (PGD) (Ovis aries (Sheep)).